The chain runs to 510 residues: NAD(P)H-quinone oxidoreductase subunit 2 B, chloroplastic (510 aa).

A run of 13 helical transmembrane segments spans residues 24–44, 57–77, 99–119, 124–144, 149–169, 183–203, 227–247, 295–315, 323–343, 354–374, 395–415, 418–438, and 484–504; these read LLFF…GLIL, IPWL…ALLF, IFQF…VEYI, MAIT…MFLC, LITI…LSGY, YLLM…WLYG, PGIS…LSPA, WHLL…LIAI, MLAY…IVGD, YMLF…LFGL, ALSL…AGFF, LYLF…IGLL, and MIVC…IIAI.

The protein belongs to the complex I subunit 2 family. As to quaternary structure, NDH is composed of at least 16 different subunits, 5 of which are encoded in the nucleus.

It is found in the plastid. The protein resides in the chloroplast thylakoid membrane. The enzyme catalyses a plastoquinone + NADH + (n+1) H(+)(in) = a plastoquinol + NAD(+) + n H(+)(out). It catalyses the reaction a plastoquinone + NADPH + (n+1) H(+)(in) = a plastoquinol + NADP(+) + n H(+)(out). Its function is as follows. NDH shuttles electrons from NAD(P)H:plastoquinone, via FMN and iron-sulfur (Fe-S) centers, to quinones in the photosynthetic chain and possibly in a chloroplast respiratory chain. The immediate electron acceptor for the enzyme in this species is believed to be plastoquinone. Couples the redox reaction to proton translocation, and thus conserves the redox energy in a proton gradient. This chain is NAD(P)H-quinone oxidoreductase subunit 2 B, chloroplastic, found in Guizotia abyssinica (Niger).